A 244-amino-acid chain; its full sequence is MTGEQLAHWIEESTSTVFFGGAGMSTESGIPDFRSAGGLYTTQHDLPFPAEYMLSHSCLVEHPAEFFDFYRTYLVHPQARPNAGHRALAALERAGQVSTIITQNIDGLHQEAGSRQVIELHGSVHRNRCLACGRAHPLSVIMDAPGVPRCSCGGMVRPEVVLYEESLRSQDLDNATTAISTADLLIVGGTSLNVYPAAALLRFFRGRHLVFINREATGYDRAADLVIHDGLGKTLSAVQRAVMP.

The Deacetylase sirtuin-type domain occupies 1–244 (MTGEQLAHWI…LSAVQRAVMP (244 aa)). Positions 22, 26, 33, 34, 103, 105, 106, and 121 each coordinate NAD(+). Phe33 contributes to the nicotinamide binding site. 2 residues coordinate nicotinamide: Ile105 and Asp106. His121 serves as the catalytic Proton acceptor. Zn(2+)-binding residues include Cys129, Cys132, Cys150, and Cys152. The NAD(+) site is built by Thr190, Ser191, Asn213, and Leu231.

It belongs to the sirtuin family. Class U subfamily. Zn(2+) is required as a cofactor.

Its subcellular location is the cytoplasm. The enzyme catalyses N(6)-acetyl-L-lysyl-[protein] + NAD(+) + H2O = 2''-O-acetyl-ADP-D-ribose + nicotinamide + L-lysyl-[protein]. Functionally, NAD-dependent protein deacetylase which modulates the activities of several enzymes which are inactive in their acetylated form. The chain is NAD-dependent protein deacetylase from Cutibacterium acnes (strain DSM 16379 / KPA171202) (Propionibacterium acnes).